Reading from the N-terminus, the 907-residue chain is Coatomer subunit beta'-1 (907 aa).

WD repeat units follow at residues 13 to 52 (QRSERVKSVDLHPTEPWILSSLYSGSVCIWDYQSQTMVKS), 55 to 94 (VSELPVRSAKFISRKQWVVAGADDMFIRVYNYNTMDKVKV), 97 to 136 (AHTDYIRCVAVHPTLPYVLSSSDDMLIKLWDWDKGWMCTQ), 140 to 180 (GHSH…PNFT), 183 to 224 (GHQK…CVQT), 227 to 266 (GHTHNISAVCFHPELPIIITGSEDGTVRIWHSTTYRLENT), 269 to 309 (YGLE…ASMD), 351 to 389 (SCDLYPQSLKHNPNGRFVVVCGDGEFIIYTALAWRNRSF), and 461 to 501 (RIDV…SYLE). 2 stretches are compositionally biased toward acidic residues: residues 850 to 866 (ETEDALDENGEPDEEVL) and 874 to 887 (STDEAVEVDADEPE). The tract at residues 850–887 (ETEDALDENGEPDEEVLEENKVEESTDEAVEVDADEPE) is disordered.

It belongs to the WD repeat COPB2 family. Oligomeric complex that consists of at least the alpha, beta, beta', gamma, delta, epsilon and zeta subunits.

It localises to the cytoplasm. Its subcellular location is the golgi apparatus membrane. The protein resides in the cytoplasmic vesicle. It is found in the COPI-coated vesicle membrane. Its function is as follows. The coatomer is a cytosolic protein complex that binds to dilysine motifs and reversibly associates with Golgi non-clathrin-coated vesicles, which further mediate biosynthetic protein transport from the ER, via the Golgi up to the trans Golgi network. Coatomer complex is required for budding from Golgi membranes, and is essential for the retrograde Golgi-to-ER transport of dilysine-tagged proteins. The chain is Coatomer subunit beta'-1 from Oryza sativa subsp. japonica (Rice).